The sequence spans 93 residues: Muconolactone Delta-isomerase (93 aa).

It belongs to the muconolactone Delta-isomerase family. Homodecamer.

It catalyses the reaction (S)-muconolactone = (4,5-dihydro-5-oxofuran-2-yl)-acetate. Its pathway is aromatic compound metabolism; beta-ketoadipate pathway; 5-oxo-4,5-dihydro-2-furylacetate from catechol: step 3/3. This is Muconolactone Delta-isomerase (catC) from Rhodococcus opacus (Nocardia opaca).